We begin with the raw amino-acid sequence, 748 residues long: Cytosolic phospholipase A2 (748 aa).

The interval 1-178 is phospholipid binding; it reads MSFIDPYQHI…MKKLLGPKKS (178 aa). Phosphoserine is present on serine 2. One can recognise a C2 domain in the interval 6–122; the sequence is PYQHIIVEHQ…KVGEKKEVPF (117 aa). Ca(2+) contacts are provided by aspartate 40, threonine 41, aspartate 43, asparagine 65, aspartate 93, alanine 94, and asparagine 95. Residues 140-739 enclose the PLA2c domain; it reads SCPDLRFSMA…SNVEARKFFN (600 aa). The active-site Nucleophile is the serine 228. A Phosphothreonine modification is found at threonine 268. Positions 427 to 458 are disordered; that stretch reads KHIVSNDSSDSDDEAQGPKGTENEEAEKEYQS. Phosphoserine is present on residues serine 434, serine 435, and serine 437. Serine 505 is subject to Phosphoserine; by MAPK. Phosphoserine is present on serine 515. Lysine 540 is covalently cross-linked (Glycyl lysine isopeptide (Lys-Gly) (interchain with G-Cter in SUMO2)). Aspartate 548 acts as the Proton acceptor in catalysis. Lysine 605 is covalently cross-linked (Glycyl lysine isopeptide (Lys-Gly) (interchain with G-Cter in SUMO2)). Phosphoserine is present on residues serine 726 and serine 728.

In terms of assembly, interacts with KAT5. Phosphorylated at both Ser-505 and Ser-726 in response to mitogenic stimuli. Expressed in various organs including uterus, kidney, spleen, liver, heart, lung and brain (at protein level).

It localises to the cytoplasm. Its subcellular location is the golgi apparatus membrane. The protein localises to the nucleus envelope. The catalysed reaction is a 1,2-diacyl-sn-glycero-3-phosphocholine + H2O = a 1-acyl-sn-glycero-3-phosphocholine + a fatty acid + H(+). It carries out the reaction a 1-O-alkyl-2-acyl-sn-glycero-3-phosphocholine + H2O = a 1-O-alkyl-sn-glycero-3-phosphocholine + a fatty acid + H(+). The enzyme catalyses a 1-acyl-sn-glycero-3-phosphocholine + H2O = sn-glycerol 3-phosphocholine + a fatty acid + H(+). It catalyses the reaction 1-hexadecanoyl-2-(5Z,8Z,11Z,14Z-eicosatetraenoyl)-sn-glycero-3-phosphocholine + H2O = 1-hexadecanoyl-sn-glycero-3-phosphocholine + (5Z,8Z,11Z,14Z)-eicosatetraenoate + H(+). The catalysed reaction is 1,2-di-(5Z,8Z,11Z,14Z-eicosatetraenoyl)-sn-glycero-3-phosphocholine + H2O = 1-(5Z,8Z,11Z,14Z-eicosatetraenoyl)-sn-glycero-3-phosphocholine + (5Z,8Z,11Z,14Z)-eicosatetraenoate + H(+). It carries out the reaction 1-octadecanoyl-2-(5Z,8Z,11Z,14Z-eicosatetraenoyl)-sn-glycero-3-phosphocholine + H2O = 1-octadecanoyl-sn-glycero-3-phosphocholine + (5Z,8Z,11Z,14Z)-eicosatetraenoate + H(+). The enzyme catalyses 1-hexadecanoyl-2-(9Z,12Z-octadecadienoyl)-sn-glycero-3-phosphocholine + H2O = (9Z,12Z)-octadecadienoate + 1-hexadecanoyl-sn-glycero-3-phosphocholine + H(+). It catalyses the reaction 1-octadecanoyl-2-(9Z,12Z,15Z-octadecatrienoyl)-sn-glycero-3-phosphocholine + H2O = (9Z,12Z,15Z)-octadecatrienoate + 1-octadecanoyl-sn-glycero-3-phosphocholine + H(+). The catalysed reaction is 1-(5Z,8Z,11Z,14Z-eicosatetraenoyl)-2-hexadecanoyl-sn-glycero-3-phosphocholine + H2O = 1-(5Z,8Z,11Z,14Z-eicosatetraenoyl)-sn-glycero-3-phosphocholine + hexadecanoate + H(+). It carries out the reaction 1-O-hexadecyl-2-(5Z,8Z,11Z,14Z)-eicosatetraenoyl-sn-glycero-3-phosphocholine + H2O = 1-O-hexadecyl-sn-glycero-3-phosphocholine + (5Z,8Z,11Z,14Z)-eicosatetraenoate + H(+). The enzyme catalyses 1,2-di-(9Z-octadecenoyl)-sn-glycero-3-phospho-(1'-sn-glycerol) + H2O = 1-(9Z-octadecenoyl)-sn-glycero-3-phospho-(1'-sn-glycerol) + (9Z)-octadecenoate + H(+). It catalyses the reaction 1-octadecanoyl-2-(5Z,8Z,11Z,14Z-eicosatetraenoyl)-sn-glycero-3-phosphate + H2O = 1-octadecanoyl-sn-glycero-3-phosphate + (5Z,8Z,11Z,14Z)-eicosatetraenoate + H(+). The catalysed reaction is 1-hexadecanoyl-sn-glycero-3-phosphocholine + H2O = sn-glycerol 3-phosphocholine + hexadecanoate + H(+). It carries out the reaction 2-(prostaglandin E2)-sn-glycero-3-phosphoethanolamine + H2O = sn-glycero-3-phosphoethanolamine + prostaglandin E2 + H(+). The enzyme catalyses 2-[(15S)-hydroxy-(5Z,8Z,11Z,13E)-eicosatetraenoyl]-sn-glycero-3-phosphocholine + H2O = (15S)-hydroxy-(5Z,8Z,11Z,13E)-eicosatetraenoate + sn-glycerol 3-phosphocholine + H(+). It catalyses the reaction 2-[(15R)-hydroxy-(5Z,8Z,11Z,13E)-eicosatetraenoyl]-sn-glycero-3-phosphocholine + H2O = (15R)-hydroxy-(5Z,8Z,11Z,13E)-eicosatetraenoate + sn-glycerol 3-phosphocholine + H(+). The catalysed reaction is 2-(prostaglandin E2)-sn-glycero-3-phosphocholine + H2O = prostaglandin E2 + sn-glycerol 3-phosphocholine + H(+). It carries out the reaction 2-[(11R)-hydroxy-(5Z,8Z,12E,14Z)-eicosatetraenoyl]-sn-glycero-3-phosphocholine + H2O = (11R)-hydroxy-(5Z,8Z,12E,14Z)-eicosatetraenoate + sn-glycerol 3-phosphocholine + H(+). The enzyme catalyses 1-(5Z,8Z,11Z,14Z-eicosatetraenoyl)-2-O-hexadecyl-sn-glycero-3-phosphocholine + H2O = 2-O-hexadecyl-sn-glycero-3-phosphocholine + (5Z,8Z,11Z,14Z)-eicosatetraenoate + H(+). It catalyses the reaction 1-octadecanoyl-2-(5Z,8Z,11Z,14Z-eicosatetraenoyl)-sn-glycero-3-phosphocholine + glycerol = 1-(5Z,8Z,11Z,14Z-eicosatetraenoyl)-glycerol + 1-octadecanoyl-sn-glycero-3-phosphocholine. The catalysed reaction is 1-octadecanoyl-2-(9Z,12Z,15Z-octadecatrienoyl)-sn-glycero-3-phosphocholine + glycerol = 1-(9Z,12Z,15Z-octadecatrienoyl)-glycerol + 1-octadecanoyl-sn-glycero-3-phosphocholine. It functions in the pathway membrane lipid metabolism; glycerophospholipid metabolism. The protein operates within lipid metabolism; arachidonate metabolism. It participates in lipid metabolism; prostaglandin biosynthesis. Its pathway is lipid metabolism; leukotriene B4 biosynthesis. Activated by cytosolic calcium, which is necessary for binding to membrane lipids. Activated by phosphorylation in response to mitogenic stimuli. Stimulated by agonists such as ATP and thrombin. Its function is as follows. Has primarily calcium-dependent phospholipase and lysophospholipase activities, with a major role in membrane lipid remodeling and biosynthesis of lipid mediators of the inflammatory response. Plays an important role in embryo implantation and parturition through its ability to trigger prostanoid production. Preferentially hydrolyzes the ester bond of the fatty acyl group attached at sn-2 position of phospholipids (phospholipase A2 activity). Selectively hydrolyzes sn-2 arachidonoyl group from membrane phospholipids, providing the precursor for eicosanoid biosynthesis via the cyclooxygenase pathway. In an alternative pathway of eicosanoid biosynthesis, hydrolyzes sn-2 fatty acyl chain of eicosanoid lysophopholipids to release free bioactive eicosanoids. Hydrolyzes the ester bond of the fatty acyl group attached at sn-1 position of phospholipids (phospholipase A1 activity) only if an ether linkage rather than an ester linkage is present at the sn-2 position. This hydrolysis is not stereospecific. Has calcium-independent phospholipase A2 and lysophospholipase activities in the presence of phosphoinositides. Has O-acyltransferase activity. Catalyzes the transfer of fatty acyl chains from phospholipids to a primary hydroxyl group of glycerol (sn-1 or sn-3), potentially contributing to monoacylglycerol synthesis. The sequence is that of Cytosolic phospholipase A2 (Pla2g4a) from Mus musculus (Mouse).